Here is a 150-residue protein sequence, read N- to C-terminus: Small ribosomal subunit protein uS11x (150 aa).

Belongs to the universal ribosomal protein uS11 family.

It is found in the cytoplasm. The chain is Small ribosomal subunit protein uS11x (RPS14C) from Arabidopsis thaliana (Mouse-ear cress).